The chain runs to 402 residues: 8-amino-7-oxononanoate synthase (402 aa).

Arg26 provides a ligand contact to substrate. Residue 114–115 coordinates pyridoxal 5'-phosphate; sequence GY. His139 lines the substrate pocket. Pyridoxal 5'-phosphate contacts are provided by Ser182, His210, and Thr239. Residue Lys242 is modified to N6-(pyridoxal phosphate)lysine. Substrate is bound at residue Thr359.

This sequence belongs to the class-II pyridoxal-phosphate-dependent aminotransferase family. BioF subfamily. In terms of assembly, homodimer. Requires pyridoxal 5'-phosphate as cofactor.

It catalyses the reaction 6-carboxyhexanoyl-[ACP] + L-alanine + H(+) = (8S)-8-amino-7-oxononanoate + holo-[ACP] + CO2. It participates in cofactor biosynthesis; biotin biosynthesis. Functionally, catalyzes the decarboxylative condensation of pimeloyl-[acyl-carrier protein] and L-alanine to produce 8-amino-7-oxononanoate (AON), [acyl-carrier protein], and carbon dioxide. The polypeptide is 8-amino-7-oxononanoate synthase (Halorhodospira halophila (strain DSM 244 / SL1) (Ectothiorhodospira halophila (strain DSM 244 / SL1))).